Here is a 645-residue protein sequence, read N- to C-terminus: ATP-dependent zinc metalloprotease FtsH 1 (645 aa).

Residues 1 to 6 are Cytoplasmic-facing; the sequence is MRSTQK. The helical transmembrane segment at 7-27 threads the bilayer; sequence TLALWFFLIIMAVFLFQAYES. The Periplasmic segment spans residues 28–110; the sequence is KQQKAIADFN…NYERADNGGF (83 aa). Residues 111–131 traverse the membrane as a helical segment; that stretch reads FQSLLVNWLPLILIVAMFLFI. Over 132 to 645 the chain is Cytoplasmic; it reads MRQIQAGGGK…PVGNTGPVTI (514 aa). 203-210 contacts ATP; that stretch reads GSPGTGKT. His-425 contacts Zn(2+). Glu-426 is an active-site residue. Positions 429 and 501 each coordinate Zn(2+).

It in the central section; belongs to the AAA ATPase family. In the C-terminal section; belongs to the peptidase M41 family. Homohexamer. Zn(2+) is required as a cofactor.

It is found in the cell inner membrane. In terms of biological role, acts as a processive, ATP-dependent zinc metallopeptidase for both cytoplasmic and membrane proteins. Plays a role in the quality control of integral membrane proteins. The sequence is that of ATP-dependent zinc metalloprotease FtsH 1 from Bdellovibrio bacteriovorus (strain ATCC 15356 / DSM 50701 / NCIMB 9529 / HD100).